The primary structure comprises 156 residues: 2-C-methyl-D-erythritol 2,4-cyclodiphosphate synthase (156 aa).

Residues D9 and H11 each coordinate a divalent metal cation. 4-CDP-2-C-methyl-D-erythritol 2-phosphate-binding positions include 9–11 and 36–37; these read DAH and HS. H44 provides a ligand contact to a divalent metal cation. 58-60 lines the 4-CDP-2-C-methyl-D-erythritol 2-phosphate pocket; it reads NIG.

Belongs to the IspF family. Homotrimer. A divalent metal cation is required as a cofactor.

The enzyme catalyses 4-CDP-2-C-methyl-D-erythritol 2-phosphate = 2-C-methyl-D-erythritol 2,4-cyclic diphosphate + CMP. It functions in the pathway isoprenoid biosynthesis; isopentenyl diphosphate biosynthesis via DXP pathway; isopentenyl diphosphate from 1-deoxy-D-xylulose 5-phosphate: step 4/6. In terms of biological role, involved in the biosynthesis of isopentenyl diphosphate (IPP) and dimethylallyl diphosphate (DMAPP), two major building blocks of isoprenoid compounds. Catalyzes the conversion of 4-diphosphocytidyl-2-C-methyl-D-erythritol 2-phosphate (CDP-ME2P) to 2-C-methyl-D-erythritol 2,4-cyclodiphosphate (ME-CPP) with a corresponding release of cytidine 5-monophosphate (CMP). In Kosmotoga olearia (strain ATCC BAA-1733 / DSM 21960 / TBF 19.5.1), this protein is 2-C-methyl-D-erythritol 2,4-cyclodiphosphate synthase.